The primary structure comprises 611 residues: ATP-dependent zinc metalloprotease FtsH 1 (611 aa).

Residues 1 to 6 are Cytoplasmic-facing; it reads MNDNNK. A helical transmembrane segment spans residues 7 to 27; it reads IIRSMVLYLLIFIAIYAMVQL. Residues 28–107 lie on the Extracellular side of the membrane; that stretch reads YSQSTEPITD…KSEPQVGPPW (80 aa). The helical transmembrane segment at 108-128 threads the bilayer; that stretch reads WVQMLPSLFLIVIFIIFWYIF. Position 124–131 (124–131) interacts with ATP; the sequence is FWYIFMQQ. Over 129–611 the chain is Cytoplasmic; the sequence is MQQAQGGGGS…GEDIEGVQFA (483 aa). His-423 contributes to the Zn(2+) binding site. Glu-424 is an active-site residue. Zn(2+) contacts are provided by His-427 and Asp-499.

In the central section; belongs to the AAA ATPase family. This sequence in the C-terminal section; belongs to the peptidase M41 family. As to quaternary structure, homohexamer. It depends on Zn(2+) as a cofactor.

It localises to the cell membrane. In terms of biological role, acts as a processive, ATP-dependent zinc metallopeptidase for both cytoplasmic and membrane proteins. Plays a role in the quality control of integral membrane proteins. This Thermoanaerobacter sp. (strain X514) protein is ATP-dependent zinc metalloprotease FtsH 1.